We begin with the raw amino-acid sequence, 356 residues long: 5-formaminoimidazole-4-carboxamide-1-(beta)-D-ribofuranosyl 5'-monophosphate synthetase (356 aa).

Residues His-27 and Ser-94 each coordinate 5-amino-1-(5-phospho-beta-D-ribosyl)imidazole-4-carboxamide. Residues Thr-101–Ser-333 form the ATP-grasp domain. ATP contacts are provided by residues Pro-145–Tyr-196 and Glu-226. Asn-255 lines the 5-amino-1-(5-phospho-beta-D-ribosyl)imidazole-4-carboxamide pocket. Glu-293 and Glu-306 together coordinate Mg(2+).

It belongs to the phosphohexose mutase family. Mg(2+) serves as cofactor. Mn(2+) is required as a cofactor.

It carries out the reaction 5-amino-1-(5-phospho-beta-D-ribosyl)imidazole-4-carboxamide + formate + ATP = 5-formamido-1-(5-phospho-D-ribosyl)imidazole-4-carboxamide + ADP + phosphate. It participates in purine metabolism; IMP biosynthesis via de novo pathway; 5-formamido-1-(5-phospho-D-ribosyl)imidazole-4-carboxamide from 5-amino-1-(5-phospho-D-ribosyl)imidazole-4-carboxamide (formate route): step 1/1. Functionally, catalyzes the ATP- and formate-dependent formylation of 5-aminoimidazole-4-carboxamide-1-beta-d-ribofuranosyl 5'-monophosphate (AICAR) to 5-formaminoimidazole-4-carboxamide-1-beta-d-ribofuranosyl 5'-monophosphate (FAICAR) in the absence of folates. The protein is 5-formaminoimidazole-4-carboxamide-1-(beta)-D-ribofuranosyl 5'-monophosphate synthetase of Methanosarcina acetivorans (strain ATCC 35395 / DSM 2834 / JCM 12185 / C2A).